Consider the following 670-residue polypeptide: MAELRAETQHGGIWPNYGNPVQMNTGRYNTQESSVPVGSAASSHLVRPRSRQHTMDYHNAPYHHGRPAQEDGDGYERYPHPSLMNIPSITTGMKRSYSQVDQTPYTEMVQDLRDDYKPAMNHDQKLLSFKKVGDKHTIVDHKGRIHEIEIEAQLHGMFFLSEFPSPGDGNVLNAELTCYRRNLFQISGNICFPQIPLSVMLETGETSQIKNMEVTISAIESVDGHPVRLIVIPWKTPPPNSPEVNQAPDQEPPSLPLIPWSEEEEDNGGDHYAIYPIGWRRLQFRIATANNGRRKELQQHFVLHLKLHGTLANGTKLVLSELTTAPIVVRGRSPRNFQARKEIPLLGSSAGSRGQTLVETGHSIVAQAVALNKPPYDSRPRVSSMDLPRTAFTFTSAKQMPQSPMQMRSNSYPTSWNPSSQVSMPHNPGSTSYPTTSMAGPEPYPKMPLSGAPSYTAEPQEMPIQQTSMPSMQLSMVAQDQQPSAPIRTQYATYASAPPPHLSLPSTADSSLNVPRYVDSNPRPSKSPRHGSHGSLTNETASGEYRYGPPSYLGNSSSDISPQSQHHPPTSGAGAGGASSGAYGTPSQEGGASAPASAPTSAAPPRDYFPPSQSWTSTAGEGQTSSYTNGGDRSYSFPTGVKTEPHSQPSHSGAPVPGVYGNNHYAWNAT.

Residues 106-341 (TEMVQDLRDD…RSPRNFQARK (236 aa)) constitute a DNA-binding region (NDT80). Polar residues-rich tracts occupy residues 394–438 (FTSA…TTSM) and 553–568 (LGNS…QHHP). Disordered stretches follow at residues 394–457 (FTSA…SYTA) and 496–670 (SAPP…WNAT). Residues 592 to 605 (ASAPASAPTSAAPP) are compositionally biased toward low complexity. Residues 611–631 (PSQSWTSTAGEGQTSSYTNGG) are compositionally biased toward polar residues.

Its subcellular location is the nucleus. It is found in the cytoplasm. Functionally, transcription factor that acts as a positive regulator of nonrepressible acid phosphatase activity. Is a major regulator of responses to nitrogen and carbon starvation and is essential for the expression of genes involved in vegetative incompatibility (like pin-c, het-6, and tol). Vegetative incompatibility is a non-self-recognition system ubiquitous in filamentous fungi which results in programmed cell death. The protein is Transcription factor vib-1 (vib-1) of Neurospora crassa (strain ATCC 24698 / 74-OR23-1A / CBS 708.71 / DSM 1257 / FGSC 987).